The chain runs to 159 residues: Putative phosphatidylinositol-3-phosphatase (159 aa).

The N-terminal stretch at 1–16 (MKRPSFLPVLIGTGFG) is a signal peptide. The next 4 helical transmembrane spans lie at 30 to 50 (LLASIIWIALYFLLPFTALLW), 54 to 74 (ALVVLFTFAGIWAANKLESCW), 104 to 124 (WYVIAAFALFRIFDIVKPLGV), and 134 to 154 (VGVMMDDVLAGVYSFILIAVA).

The protein localises to the membrane. It catalyses the reaction a 1,2-diacyl-sn-glycero-3-phospho-(1D-myo-inositol-3-phosphate) + H2O = a 1,2-diacyl-sn-glycero-3-phospho-(1D-myo-inositol) + phosphate. In terms of biological role, may be responsible for the conversion of phosphatidylinositol phosphate diacylglycerol (PIP-DAG) to phosphatidylinositol diacylglycerol (PI-DAG), making it a key enzyme in the inositol glycerophospholipid biosynthesis pathway. This Bacteroides thetaiotaomicron (strain ATCC 29148 / DSM 2079 / JCM 5827 / CCUG 10774 / NCTC 10582 / VPI-5482 / E50) protein is Putative phosphatidylinositol-3-phosphatase.